The primary structure comprises 353 residues: Melatonin receptor type 1A (353 aa).

Residues 1 to 26 are disordered; it reads MRANGSELNGTVLPRDPPAEGSPRRP. Residues 1–32 lie on the Extracellular side of the membrane; sequence MRANGSELNGTVLPRDPPAEGSPRRPPWVTST. 2 N-linked (GlcNAc...) asparagine glycosylation sites follow: Asn4 and Asn9. A helical transmembrane segment spans residues 33–53; it reads LATILIFTIVVDLLGNLLVIL. The Cytoplasmic segment spans residues 54–66; it reads SVYRNKKLRNAGN. The chain crosses the membrane as a helical span at residues 67–87; sequence IFVVSLAIADLVVAIYPYPLV. The Extracellular portion of the chain corresponds to 88–105; that stretch reads LTSVFHNGWNLGYLHCQI. Cys103 and Cys180 are disulfide-bonded. A helical membrane pass occupies residues 106–126; it reads SGFLMGLSVIGSIFNITGIAI. Residues 127–145 lie on the Cytoplasmic side of the membrane; sequence NRYCYICHSLKYDKLYSDK. The chain crosses the membrane as a helical span at residues 146 to 166; sequence NSLCYVGLIWVLTVVAIVPNL. The Extracellular portion of the chain corresponds to 167–190; it reads FVGSLQYDPRIYSCTFAQSVSSAY. Residues 191-211 traverse the membrane as a helical segment; it reads TIAVVFFHFILPIAIVTYCYL. Topologically, residues 212 to 243 are cytoplasmic; that stretch reads RIWILVIQVRRRVKPDNNPRLKPHDFRNFVTM. The chain crosses the membrane as a helical span at residues 244–264; it reads FVVFVLFAVCWAPLNFIGLAV. Residues 265 to 277 lie on the Extracellular side of the membrane; sequence AVDPETIIPRIPE. The chain crosses the membrane as a helical span at residues 278 to 298; the sequence is WLFVSSYYMAYFNSCLNAIIY. Residues 299 to 353 are Cytoplasmic-facing; that stretch reads GLLNQNFRREYKKIVVSFCTAKAFFQDSSNDAADRIRSKPSPLITNNNQVKVDSV.

Belongs to the G-protein coupled receptor 1 family. Expressed in optic tectum and retina, less in neostriatum, hypothalamus and thalamus.

Its subcellular location is the cell membrane. Its function is as follows. High affinity receptor for melatonin. The activity of this receptor is mediated by pertussis toxin sensitive G proteins that inhibits adenylate cyclase activity. The protein is Melatonin receptor type 1A of Gallus gallus (Chicken).